The primary structure comprises 156 residues: MGKLTVVGILTLFIFYIVAASGKCTAPVNCPAGWKKYKTNCYFFSPDGKNWHDAAKQCQTMGGYLVKITDSEENSWVVDMITKSVKHKYGYWMGMADLKNEGDWRWVNDSSAVSYSNWHRGQPNNANNEDCGHFWSAVNYEWNDIVCNTDQMGYIC.

An N-terminal signal peptide occupies residues 1–22 (MGKLTVVGILTLFIFYIVAASG). 3 disulfide bridges follow: Cys-30–Cys-41, Cys-58–Cys-156, and Cys-131–Cys-147. A C-type lectin domain is found at 37 to 156 (YKTNCYFFSP…CNTDQMGYIC (120 aa)).

Component of the organic matrix of calcified shell layers like nacre and prisms.

The protein localises to the secreted. This Mytilus galloprovincialis (Mediterranean mussel) protein is Perlucin-like protein.